The primary structure comprises 577 residues: MHWLRKVQGLCTLWGTQMSSRTLYINSRQLVSLQWGHQEVPAKFNFASDVLDHWADMEKAGKRLPSPALWWVNGKGKELMWNFRELSENSQQAANVLSGACGLQRGDRVAVVLPRVPEWWLVILGCIRAGLIFMPGTIQMKSTDILYRLQMSKAKAIVAGDEVIQEVDTVASECPSLRIKLLVSEKSCDGWLNFKKLLNEASTTHHCVETGSQEASAIYFTSGTSGLPKMAEHSYSSLGLKAKMDAGWTGLQASDIMWTISDTGWILNILCSLMEPWALGACTFVHLLPKFDPLVILKTLSSYPIKSMMGAPIVYRMLLQQDLSSYKFPHLQNCVTVGESLLPETLENWRAQTGLDIRESYGQTETGLTCMVSKTMKIKPGYMGTAASCYDVQIIDDKGNVLPPGTEGDIGIRVKPIRPIGIFSGYVDNPDKTAANIRGDFWLLGDRGIKDEDGYFQFMGRANDIINSSGYRIGPSEVENALMEHPAVVETAVISSPDPVRGEVVKAFVVLASQFLSHDPEQLTKELQQHVKSVTAPYKYPRKIEFVLNLPKTVTGKIQRAKLRDKEWKMSGKARAQ.

The transit peptide at 1–46 (MHWLRKVQGLCTLWGTQMSSRTLYINSRQLVSLQWGHQEVPAKFNF) directs the protein to the mitochondrion. CoA is bound at residue Q139. ATP contacts are provided by residues 221 to 229 (TSGTSGLPK), 359 to 364 (ESYGQT), D446, and R461. Substrate is bound at residue T364. 469 to 471 (SGY) provides a ligand contact to CoA. R472 is a substrate binding site. R501 contributes to the CoA binding site. S513 is modified (phosphoserine). CoA is bound by residues K532 and 540 to 542 (YPR). K557 provides a ligand contact to ATP.

It belongs to the ATP-dependent AMP-binding enzyme family. As to quaternary structure, monomer. Requires Mg(2+) as cofactor. The cofactor is Mn(2+).

Its subcellular location is the mitochondrion. It carries out the reaction a medium-chain fatty acid + ATP + CoA = a medium-chain fatty acyl-CoA + AMP + diphosphate. The catalysed reaction is benzoate + ATP + CoA = benzoyl-CoA + AMP + diphosphate. The enzyme catalyses hexanoate + ATP + CoA = hexanoyl-CoA + AMP + diphosphate. It catalyses the reaction butanoate + ATP + CoA = butanoyl-CoA + AMP + diphosphate. It carries out the reaction octanoate + ATP + CoA = octanoyl-CoA + AMP + diphosphate. The catalysed reaction is decanoate + ATP + CoA = decanoyl-CoA + AMP + diphosphate. Catalyzes the activation of fatty acids by CoA to produce an acyl-CoA, the first step in fatty acid metabolism. Capable of activating medium-chain fatty acids (e.g. butyric (C4) to decanoic (C10) acids), and certain carboxylate-containing xenobiotics, e.g. benzoate. This is Acyl-coenzyme A synthetase ACSM2A, mitochondrial (ACSM2A) from Homo sapiens (Human).